A 724-amino-acid chain; its full sequence is Ribosomal protein S6 kinase alpha-1 (724 aa).

Phosphoserine is present on serine 54. The Protein kinase 1 domain occupies 62–310 (FELLKVLGQG…AEEIKRHIFY (249 aa)). Residues 68–76 (LGQGSFGKV) and lysine 94 each bind ATP. The Proton acceptor role is filled by aspartate 187. Serine 221 carries the phosphoserine; by PDPK1 modification. The residue at position 296 (serine 296) is a Phosphoserine. One can recognise an AGC-kinase C-terminal domain in the interval 311–380 (STIDWNKLYR…VATGLMEDDG (70 aa)). Phosphothreonine is present on threonine 348. Phosphoserine occurs at positions 352, 358, and 369. In terms of domain architecture, Protein kinase 2 spans 407-664 (YVVKETIGVG…AKQVLQHPWI (258 aa)). Residues 413–421 (IGVGSYSVC) and lysine 436 contribute to the ATP site. Catalysis depends on aspartate 524, which acts as the Proton acceptor. Threonine 562 is modified (phosphothreonine). A Phosphoserine modification is found at serine 721.

This sequence belongs to the protein kinase superfamily. AGC Ser/Thr protein kinase family. S6 kinase subfamily. Forms a complex with either MAPK1/ERK2 or MAPK3/ERK1 in quiescent cells. Transiently dissociates following mitogenic stimulation. Interacts with ETV1/ER81 and FGFR1. It depends on Mg(2+) as a cofactor. In terms of processing, activated by phosphorylation at Ser-221 by PDPK1. Autophosphorylated on Ser-369, as part of the activation process. May be phosphorylated at Thr-348 and Ser-352 by MAPK1/ERK2 and MAPK3/ERK1. Post-translationally, N-terminal myristoylation results in an activated kinase in the absence of added growth factors. In terms of tissue distribution, intestine, thymus, and lung.

Its subcellular location is the nucleus. It is found in the cytoplasm. It catalyses the reaction L-seryl-[protein] + ATP = O-phospho-L-seryl-[protein] + ADP + H(+). The enzyme catalyses L-threonyl-[protein] + ATP = O-phospho-L-threonyl-[protein] + ADP + H(+). Upon extracellular signal or mitogen stimulation, phosphorylated at Thr-562 in the C-terminal kinase domain (CTKD) by MAPK1/ERK2 and MAPK3/ERK1. The activated CTKD then autophosphorylates Ser-369, allowing binding of PDPK1, which in turn phosphorylates Ser-221 in the N-terminal kinase domain (NTDK) leading to the full activation of the protein and subsequent phosphorylation of the substrates by the NTKD. In terms of biological role, serine/threonine-protein kinase that acts downstream of ERK (MAPK1/ERK2 and MAPK3/ERK1) signaling and mediates mitogenic and stress-induced activation of the transcription factors CREB1, ETV1/ER81 and NR4A1/NUR77, regulates translation through RPS6 and EIF4B phosphorylation, and mediates cellular proliferation, survival, and differentiation by modulating mTOR signaling and repressing pro-apoptotic function of BAD and DAPK1. In fibroblast, is required for EGF-stimulated phosphorylation of CREB1, which results in the subsequent transcriptional activation of several immediate-early genes. In response to mitogenic stimulation (EGF and PMA), phosphorylates and activates NR4A1/NUR77 and ETV1/ER81 transcription factors and the cofactor CREBBP. Upon insulin-derived signal, acts indirectly on the transcription regulation of several genes by phosphorylating GSK3B at 'Ser-9' and inhibiting its activity. Phosphorylates RPS6 in response to serum or EGF via an mTOR-independent mechanism and promotes translation initiation by facilitating assembly of the pre-initiation complex. In response to insulin, phosphorylates EIF4B, enhancing EIF4B affinity for the EIF3 complex and stimulating cap-dependent translation. Is involved in the mTOR nutrient-sensing pathway by directly phosphorylating TSC2 at 'Ser-1798', which potently inhibits TSC2 ability to suppress mTOR signaling, and mediates phosphorylation of RPTOR, which regulates mTORC1 activity and may promote rapamycin-sensitive signaling independently of the PI3K/AKT pathway. Also involved in feedback regulation of mTORC1 and mTORC2 by phosphorylating DEPTOR. Mediates cell survival by phosphorylating the pro-apoptotic proteins BAD and DAPK1 and suppressing their pro-apoptotic function. Promotes the survival of hepatic stellate cells by phosphorylating CEBPB in response to the hepatotoxin carbon tetrachloride (CCl4). Mediates induction of hepatocyte prolifration by TGFA through phosphorylation of CEBPB. Is involved in cell cycle regulation by phosphorylating the CDK inhibitor CDKN1B, which promotes CDKN1B association with 14-3-3 proteins and prevents its translocation to the nucleus and inhibition of G1 progression. Phosphorylates EPHA2 at 'Ser-897', the RPS6KA-EPHA2 signaling pathway controls cell migration. In response to mTORC1 activation, phosphorylates EIF4B at 'Ser-406' and 'Ser-422' which stimulates bicarbonate cotransporter SLC4A7 mRNA translation, increasing SLC4A7 protein abundance and function. This chain is Ribosomal protein S6 kinase alpha-1 (Rps6ka1), found in Mus musculus (Mouse).